Reading from the N-terminus, the 565-residue chain is Estrogen receptor gamma (565 aa).

The interval 1 to 168 (MAVASSPEKD…TSGGKTDLHY (168 aa)) is modulating. 2 consecutive NR C4-type zinc fingers follow at residues 169–189 (CAVC…CEGC) and 205–229 (CPAT…LRKC). Positions 169–234 (CAVCHDYASG…RLRKCYEVGM (66 aa)) form a DNA-binding region, nuclear receptor. The interval 235–285 (TKCGMRKERGNYRSPQMRRMTRLTSQGRTDSSSVLTGSAVVSLNAPQPSAL) is hinge. The region spanning 286–516 (TSEQLIERLM…DLLLEMLDAH (231 aa)) is the NR LBD domain. The segment at 522-565 (RLPRRSPEQEPEDQADAPAPPHSSGSGPSYTWTPSSSEGAGEPQ) is disordered.

Belongs to the nuclear hormone receptor family. NR3 subfamily. Homodimer. Abundant in the ovary and testes, barely detectable in the brain and muscle and undetectable in the liver.

The protein resides in the nucleus. Its function is as follows. The steroid hormones and their receptors are involved in the regulation of eukaryotic gene expression and affect cellular proliferation and differentiation in target tissues. This is Estrogen receptor gamma (esr3) from Micropogonias undulatus (Atlantic croaker).